Reading from the N-terminus, the 157-residue chain is Protein Smg (157 aa).

This sequence belongs to the Smg family.

The protein is Protein Smg of Sodalis glossinidius (strain morsitans).